A 343-amino-acid polypeptide reads, in one-letter code: uncharacterized protein (343 aa).

The protein belongs to the histone deacetylase family.

In terms of biological role, putative deacetylase. This is an uncharacterized protein from Methanocaldococcus jannaschii (strain ATCC 43067 / DSM 2661 / JAL-1 / JCM 10045 / NBRC 100440) (Methanococcus jannaschii).